Here is a 655-residue protein sequence, read N- to C-terminus: Methyl-accepting chemotaxis protein McpC (655 aa).

The Cytoplasmic portion of the chain corresponds to Met1–Lys8. Residues Ile9–Tyr29 form a helical membrane-spanning segment. The Extracellular portion of the chain corresponds to Leu30–Arg276. A Cache domain is found at Trp148–Asp225. Residues Ala277 to Ala297 form a helical membrane-spanning segment. Residues Lys298–Glu350 form the HAMP domain. Residues Lys298–Leu655 are Cytoplasmic-facing. Residues Val369–Asn619 form the Methyl-accepting transducer domain.

It belongs to the methyl-accepting chemotaxis (MCP) protein family. In terms of assembly, interacts with FloT. Some glutamine residues are deamidated to glutamate by CheD and subsequently methylated.

The protein localises to the cell membrane. It is found in the membrane raft. In terms of biological role, chemotactic-signal transducers respond to changes in the concentration of attractants and repellents in the environment, transduce a signal from the outside to the inside of the cell, and facilitate sensory adaptation through the variation of the level of methylation. All amino acids serve as attractants in B.subtilis, they appear to cause an increase in the turnover methyl groups, leading to methylation of an unidentified acceptor, while repellents have been shown to cause a decrease in methyl group turnover. The methyl groups are added by a methyltransferase and removed by a methylesterase. McpC is required for taxis to cysteine, proline, threonine, glycine, serine, lysine, valine and arginine and for aspartate, glutamine, histidine and glutamate. Primarily mediates response to positive stimulus of PTS carbohydrates. Greatly influences the duration or magnitude of the response to negative PTS carbohydrate stimulus. This is Methyl-accepting chemotaxis protein McpC (mcpC) from Bacillus subtilis (strain 168).